Here is a 214-residue protein sequence, read N- to C-terminus: FMN-dependent NADH:quinone oxidoreductase 1 (214 aa).

Residues 17 to 19 (SWS) and 144 to 147 (SAGG) each bind FMN.

It belongs to the azoreductase type 1 family. As to quaternary structure, homodimer. Requires FMN as cofactor.

It carries out the reaction 2 a quinone + NADH + H(+) = 2 a 1,4-benzosemiquinone + NAD(+). The enzyme catalyses N,N-dimethyl-1,4-phenylenediamine + anthranilate + 2 NAD(+) = 2-(4-dimethylaminophenyl)diazenylbenzoate + 2 NADH + 2 H(+). Functionally, quinone reductase that provides resistance to thiol-specific stress caused by electrophilic quinones. Its function is as follows. Also exhibits azoreductase activity. Catalyzes the reductive cleavage of the azo bond in aromatic azo compounds to the corresponding amines. In Lactococcus lactis subsp. lactis (strain IL1403) (Streptococcus lactis), this protein is FMN-dependent NADH:quinone oxidoreductase 1.